Reading from the N-terminus, the 424-residue chain is UDP-N-acetylglucosamine 1-carboxyvinyltransferase (424 aa).

Residue 22-23 coordinates phosphoenolpyruvate; that stretch reads KN. Residue Arg93 coordinates UDP-N-acetyl-alpha-D-glucosamine. Cys117 (proton donor) is an active-site residue. A 2-(S-cysteinyl)pyruvic acid O-phosphothioketal modification is found at Cys117. UDP-N-acetyl-alpha-D-glucosamine is bound by residues 122–126, Asp307, and Val329; that span reads RPIDL.

This sequence belongs to the EPSP synthase family. MurA subfamily.

It is found in the cytoplasm. The enzyme catalyses phosphoenolpyruvate + UDP-N-acetyl-alpha-D-glucosamine = UDP-N-acetyl-3-O-(1-carboxyvinyl)-alpha-D-glucosamine + phosphate. The protein operates within cell wall biogenesis; peptidoglycan biosynthesis. Functionally, cell wall formation. Adds enolpyruvyl to UDP-N-acetylglucosamine. In Chlorobium luteolum (strain DSM 273 / BCRC 81028 / 2530) (Pelodictyon luteolum), this protein is UDP-N-acetylglucosamine 1-carboxyvinyltransferase.